A 713-amino-acid chain; its full sequence is DNA polymerase eta (713 aa).

A UmuC domain is found at 9–259 (VALVDMDCFF…MPIRKIRSLG (251 aa)). Aspartate 13 and methionine 14 together coordinate Mg(2+). The Mn(2+) site is built by aspartate 13 and methionine 14. Arginine 61 serves as a coordination point for a 2'-deoxyribonucleoside 5'-triphosphate. Residues aspartate 115 and glutamate 116 each coordinate Mg(2+). Residues aspartate 115 and glutamate 116 each contribute to the Mn(2+) site. 2 disordered regions span residues 441–472 (TSFL…AVTA) and 495–527 (EASL…QSTG). 2 stretches are compositionally biased toward polar residues: residues 456 to 466 (VTSSEAKTQGS) and 497 to 527 (SLSS…QSTG). Residues 628–662 (AAEDQVPCEKCGSLVPVWDMPEHMDYHFALELQKS) form a UBZ3-type zinc finger. Residues cysteine 635, cysteine 638, histidine 650, and histidine 654 each contribute to the Zn(2+) site. The tract at residues 677-705 (VSHQGKRNPKSPLACTNKRPRPEGMQTLE) is disordered. Residues lysine 682, lysine 686, and lysine 694 each participate in a glycyl lysine isopeptide (Lys-Gly) (interchain with G-Cter in ubiquitin) cross-link. Positions 701 to 708 (MQTLESFF) match the PIP-box motif. Lysine 709 participates in a covalent cross-link: Glycyl lysine isopeptide (Lys-Gly) (interchain with G-Cter in ubiquitin).

The protein belongs to the DNA polymerase type-Y family. Interacts with REV1. Interacts with monoubiquitinated PCNA, but not unmodified PCNA. Interacts with POLI; this interaction targets POLI to the replication machinery. Interacts with PALB2 and BRCA2; the interactions are direct and are required to sustain the recruitment of POLH at blocked replication forks and to stimulate POLH-dependent DNA synthesis on D loop substrates. Interacts (via C-terminus) with TRAIP. Interacts with ubiquitin. Interacts with POLDIP2. Mg(2+) is required as a cofactor. It depends on Mn(2+) as a cofactor. In terms of processing, monoubiquitinated by RCHY1/PIRH2. Ubiquitination depends on integrity of the UBZ3-type zinc finger domain and is enhanced by TRAIP. Ubiquitination inhibits the ability of PolH to interact with PCNA and to bypass UV-induced lesions.

Its subcellular location is the nucleus. It catalyses the reaction DNA(n) + a 2'-deoxyribonucleoside 5'-triphosphate = DNA(n+1) + diphosphate. Its activity is regulated as follows. The enzyme in complex with the DNA substrate binds a third divalent metal cation. The binding of this third divalent cation, which is coordinated by water molecules and two oxygen atoms from DNA and dNTP, is essential for catalyzing the DNA synthesis. In terms of biological role, DNA polymerase specifically involved in the DNA repair by translesion synthesis (TLS). Due to low processivity on both damaged and normal DNA, cooperates with the heterotetrameric (REV3L, REV7, POLD2 and POLD3) POLZ complex for complete bypass of DNA lesions. Inserts one or 2 nucleotide(s) opposite the lesion, the primer is further extended by the tetrameric POLZ complex. In the case of 1,2-intrastrand d(GpG)-cisplatin cross-link, inserts dCTP opposite the 3' guanine. Particularly important for the repair of UV-induced pyrimidine dimers. Although inserts the correct base, may cause base transitions and transversions depending upon the context. May play a role in hypermutation at immunoglobulin genes. Forms a Schiff base with 5'-deoxyribose phosphate at abasic sites, but does not have any lyase activity, preventing the release of the 5'-deoxyribose phosphate (5'-dRP) residue. This covalent trapping of the enzyme by the 5'-dRP residue inhibits its DNA synthetic activity during base excision repair, thereby avoiding high incidence of mutagenesis. Targets POLI to replication foci. The chain is DNA polymerase eta (POLH) from Homo sapiens (Human).